Consider the following 227-residue polypeptide: Cytochrome c oxidase subunit 2 (227 aa).

At 1–14 (MAYPFQLGLQDATS) the chain is on the mitochondrial intermembrane side. Residues 15 to 45 (PIMEELLHFHDHTLMIVFLISSLVLYIISLM) form a helical membrane-spanning segment. Over 46 to 59 (LTTKLTHTSTMDAQ) the chain is Mitochondrial matrix. A helical membrane pass occupies residues 60–87 (EVETVWTILPAIILILIALPSLRILYMM). The Mitochondrial intermembrane portion of the chain corresponds to 88–227 (DEINNPSLTV…YFEAWSALMV (140 aa)). The Cu cation site is built by H161, C196, E198, C200, H204, and M207. A Mg(2+)-binding site is contributed by E198. The residue at position 218 (Y218) is a Phosphotyrosine.

This sequence belongs to the cytochrome c oxidase subunit 2 family. In terms of assembly, component of the cytochrome c oxidase (complex IV, CIV), a multisubunit enzyme composed of 14 subunits. The complex is composed of a catalytic core of 3 subunits MT-CO1, MT-CO2 and MT-CO3, encoded in the mitochondrial DNA, and 11 supernumerary subunits COX4I, COX5A, COX5B, COX6A, COX6B, COX6C, COX7A, COX7B, COX7C, COX8 and NDUFA4, which are encoded in the nuclear genome. The complex exists as a monomer or a dimer and forms supercomplexes (SCs) in the inner mitochondrial membrane with NADH-ubiquinone oxidoreductase (complex I, CI) and ubiquinol-cytochrome c oxidoreductase (cytochrome b-c1 complex, complex III, CIII), resulting in different assemblies (supercomplex SCI(1)III(2)IV(1) and megacomplex MCI(2)III(2)IV(2)). Found in a complex with TMEM177, COA6, COX18, COX20, SCO1 and SCO2. Interacts with TMEM177 in a COX20-dependent manner. Interacts with COX20. Interacts with COX16. Requires Cu cation as cofactor.

It is found in the mitochondrion inner membrane. It catalyses the reaction 4 Fe(II)-[cytochrome c] + O2 + 8 H(+)(in) = 4 Fe(III)-[cytochrome c] + 2 H2O + 4 H(+)(out). Its function is as follows. Component of the cytochrome c oxidase, the last enzyme in the mitochondrial electron transport chain which drives oxidative phosphorylation. The respiratory chain contains 3 multisubunit complexes succinate dehydrogenase (complex II, CII), ubiquinol-cytochrome c oxidoreductase (cytochrome b-c1 complex, complex III, CIII) and cytochrome c oxidase (complex IV, CIV), that cooperate to transfer electrons derived from NADH and succinate to molecular oxygen, creating an electrochemical gradient over the inner membrane that drives transmembrane transport and the ATP synthase. Cytochrome c oxidase is the component of the respiratory chain that catalyzes the reduction of oxygen to water. Electrons originating from reduced cytochrome c in the intermembrane space (IMS) are transferred via the dinuclear copper A center (CU(A)) of subunit 2 and heme A of subunit 1 to the active site in subunit 1, a binuclear center (BNC) formed by heme A3 and copper B (CU(B)). The BNC reduces molecular oxygen to 2 water molecules using 4 electrons from cytochrome c in the IMS and 4 protons from the mitochondrial matrix. This Cuon alpinus (Dhole) protein is Cytochrome c oxidase subunit 2 (MT-CO2).